Reading from the N-terminus, the 414-residue chain is Putative F-box/kelch-repeat protein At1g20940 (414 aa).

Residues 13–65 (SSIINDLPLDLLDEILFRLEPKSMAMMRCTNNSIKSYLSDPRFGPEYPSWVRP) form the F-box domain. Kelch repeat units lie at residues 281-328 (LTLI…MYDG) and 331-378 (LVVR…KLTP).

In terms of assembly, interacts with DEK3.

It functions in the pathway protein modification; protein ubiquitination. Its function is as follows. Probable component of an E3 ubiquitin ligase complex. The sequence is that of Putative F-box/kelch-repeat protein At1g20940 from Arabidopsis thaliana (Mouse-ear cress).